A 185-amino-acid polypeptide reads, in one-letter code: Ribosome-recycling factor (185 aa).

The protein belongs to the RRF family.

Its subcellular location is the cytoplasm. Its function is as follows. Responsible for the release of ribosomes from messenger RNA at the termination of protein biosynthesis. May increase the efficiency of translation by recycling ribosomes from one round of translation to another. This is Ribosome-recycling factor from Streptococcus agalactiae serotype V (strain ATCC BAA-611 / 2603 V/R).